The primary structure comprises 346 residues: Biotin synthase (346 aa).

A Radical SAM core domain is found at 38–256 (QQVQVSTLLS…IAVARIMMPT (219 aa)). 3 residues coordinate [4Fe-4S] cluster: cysteine 53, cysteine 57, and cysteine 60. Residues cysteine 97, cysteine 128, cysteine 188, and arginine 260 each coordinate [2Fe-2S] cluster.

The protein belongs to the radical SAM superfamily. Biotin synthase family. Homodimer. [4Fe-4S] cluster serves as cofactor. [2Fe-2S] cluster is required as a cofactor.

It catalyses the reaction (4R,5S)-dethiobiotin + (sulfur carrier)-SH + 2 reduced [2Fe-2S]-[ferredoxin] + 2 S-adenosyl-L-methionine = (sulfur carrier)-H + biotin + 2 5'-deoxyadenosine + 2 L-methionine + 2 oxidized [2Fe-2S]-[ferredoxin]. Its pathway is cofactor biosynthesis; biotin biosynthesis; biotin from 7,8-diaminononanoate: step 2/2. In terms of biological role, catalyzes the conversion of dethiobiotin (DTB) to biotin by the insertion of a sulfur atom into dethiobiotin via a radical-based mechanism. The sequence is that of Biotin synthase from Salmonella agona (strain SL483).